The sequence spans 309 residues: CDK-activating kinase assembly factor MAT1 (309 aa).

Met-1 carries the post-translational modification N-acetylmethionine. The RING-type zinc finger occupies 6-50 (CPRCKTTKYRNPSLKLMVNVCGHTLCESCVDLLFVRGAGNCPECG). A Phosphothreonine modification is found at Thr-51. The 20-residue stretch at 142–161 (REQEELEEALEVERQEHEQR) folds into the UIM domain. Residue Ser-279 is modified to Phosphoserine.

As to quaternary structure, associates primarily with CDK7 and cyclin H to form the CAK complex. CAK can further associate with the core-TFIIH to form the TFIIH basal transcription factor.

It localises to the nucleus. Its function is as follows. Stabilizes the cyclin H-CDK7 complex to form a functional CDK-activating kinase (CAK) enzymatic complex. CAK activates the cyclin-associated kinases CDK1, CDK2, CDK4 and CDK6 by threonine phosphorylation. CAK complexed to the core-TFIIH basal transcription factor activates RNA polymerase II by serine phosphorylation of the repetitive C-terminal domain (CTD) of its large subunit (POLR2A), allowing its escape from the promoter and elongation of the transcripts. Involved in cell cycle control and in RNA transcription by RNA polymerase II. In Mus musculus (Mouse), this protein is CDK-activating kinase assembly factor MAT1 (Mnat1).